Here is a 966-residue protein sequence, read N- to C-terminus: Catenin alpha-2 (966 aa).

Residues 924 to 940 (PEKKPLVKREKPEEYQT) show a composition bias toward basic and acidic residues. The segment at 924-952 (PEKKPLVKREKPEEYQTRVRRGSQKKHIS) is disordered. Residues 941–951 (RVRRGSQKKHI) show a composition bias toward basic residues.

Belongs to the vinculin/alpha-catenin family.

It localises to the cell membrane. The protein resides in the cytoplasm. Its subcellular location is the cytoskeleton. It is found in the cell junction. The protein localises to the adherens junction. It localises to the cell projection. The protein resides in the axon. Its subcellular location is the nucleus. Its function is as follows. May function as a linker between cadherin adhesion receptors and the cytoskeleton to regulate cell-cell adhesion and differentiation in the nervous system. This chain is Catenin alpha-2 (ctnna2), found in Xenopus laevis (African clawed frog).